A 463-amino-acid chain; its full sequence is MATDGMVLHKRSLSEGGTSTQAWKVLSQTLPSRGPDVDAWWQLTGRHLAVLLDAAAYPIEKQYECLLYHYHYAAPYLGPAPREGASPPTWKSMLQLDGTPFEFSWKWNNPGGEPDVRFGLEPIGPMAGTSLDPLNHLAMREILYKLSSAVPGSDLTWTHHFLATLFDHDYAKYTQKAATMGSSIGTSLVYSLEFQRKSTGLKTYFHPRKLDQQAFLDIPSWEASFRGLHPNSPSRTAVHEFLSTNPEGKLLKPFCLSVDNCSPAKARIKWYFNSPHTNFRAIREIMTLGGRIADTETRTKQFSELFNLLKTVTEEHADFPETSEFPYVPNNGDSIIPNFADAPDMLKGCVYFFDIAPGRNLPAIKVYFPVRNHCRNDLAVTQNLNRWLESRGRGQYGAAFGRALETIADYRRLEDSGGLLSFLSCQFMEDGELDLTSYFNPQAFHSGRLTHRRATRRRGDDRW.

It belongs to the tryptophan dimethylallyltransferase family.

The protein operates within secondary metabolite biosynthesis. With respect to regulation, mn(2+) and Co(2+) strongly enhance prenylation activity. Dehydrogenase involved in the conversion of monodictyphenone to the prenyl xanthones such as emericellin, shamixanthone and epishamixanthone. Monodictyphenone is first converted to variecoxanthone A via a paeciloxanthone intermediate by the consecutive actions of the FAD-dependent monooxygenase mdpD and the xanthone prenyltransferase xptB. XptB catalyzes regular O-prenylation at the hydroxy group of C-7 of the xanthone ring. Variecoxanthone A is further prenylated to emericellin by xptA before being reduced to shamixanthone and epishamixanthone by the dehydrogenase xptC. This chain is Xanthone prenyltransferase B, found in Emericella nidulans (strain FGSC A4 / ATCC 38163 / CBS 112.46 / NRRL 194 / M139) (Aspergillus nidulans).